Here is a 134-residue protein sequence, read N- to C-terminus: Small ribosomal subunit protein uS8c (134 aa).

Belongs to the universal ribosomal protein uS8 family. Part of the 30S ribosomal subunit.

The protein localises to the plastid. It localises to the chloroplast. Functionally, one of the primary rRNA binding proteins, it binds directly to 16S rRNA central domain where it helps coordinate assembly of the platform of the 30S subunit. This chain is Small ribosomal subunit protein uS8c (rps8), found in Nicotiana tomentosiformis (Tobacco).